Consider the following 179-residue polypeptide: MARLKEIYRKEIAPKLKEELKLSNVMEVPRVTKITLNMGLGEAIGDKKVIEHAVADLEKITGQKVVVTYARKSIAGFKVREGWPIGVKVTLRRERMYEFLDRLLSISLPRVRDFRGLNAKSFDGRGNYSMGVKEQIIFPEIDYDKIDALRGLDITLTTTAKNDDEGRALLRAFKFPFRN.

Belongs to the universal ribosomal protein uL5 family. Part of the 50S ribosomal subunit; part of the 5S rRNA/L5/L18/L25 subcomplex. Contacts the 5S rRNA and the P site tRNA. Forms a bridge to the 30S subunit in the 70S ribosome.

In terms of biological role, this is one of the proteins that bind and probably mediate the attachment of the 5S RNA into the large ribosomal subunit, where it forms part of the central protuberance. In the 70S ribosome it contacts protein S13 of the 30S subunit (bridge B1b), connecting the 2 subunits; this bridge is implicated in subunit movement. Contacts the P site tRNA; the 5S rRNA and some of its associated proteins might help stabilize positioning of ribosome-bound tRNAs. This Pseudomonas fluorescens (strain ATCC BAA-477 / NRRL B-23932 / Pf-5) protein is Large ribosomal subunit protein uL5.